The chain runs to 469 residues: Glutamate--tRNA ligase 1 (469 aa).

The 'HIGH' region motif lies at 10-20; the sequence is PSPTGYLHIGG. Zn(2+) contacts are provided by Cys-99, Cys-101, Cys-126, and Asp-128. The 'KMSKS' region signature appears at 237–241; it reads RLSKR. Residue Lys-240 participates in ATP binding.

Belongs to the class-I aminoacyl-tRNA synthetase family. Glutamate--tRNA ligase type 1 subfamily. Monomer. Requires Zn(2+) as cofactor.

The protein resides in the cytoplasm. It catalyses the reaction tRNA(Glu) + L-glutamate + ATP = L-glutamyl-tRNA(Glu) + AMP + diphosphate. Functionally, catalyzes the attachment of glutamate to tRNA(Glu) in a two-step reaction: glutamate is first activated by ATP to form Glu-AMP and then transferred to the acceptor end of tRNA(Glu). The chain is Glutamate--tRNA ligase 1 from Coxiella burnetii (strain CbuK_Q154) (Coxiella burnetii (strain Q154)).